A 1215-amino-acid polypeptide reads, in one-letter code: Kinesin-like protein KIN-7I (1215 aa).

The region spanning 3 to 327 (RIHVAVRARP…LQFASRALRV (325 aa)) is the Kinesin motor domain. Residue 79–86 (GQTNSGKT) coordinates ATP. Coiled-coil stretches lie at residues 333 to 414 (VNEI…IENL), 571 to 646 (ESEA…AAYE), 708 to 855 (IRDY…KRDS), and 894 to 979 (DMEA…KEDM).

It belongs to the TRAFAC class myosin-kinesin ATPase superfamily. Kinesin family. KIN-7 subfamily.

The chain is Kinesin-like protein KIN-7I from Oryza sativa subsp. japonica (Rice).